The chain runs to 221 residues: 2-amino-5-formylamino-6-ribosylaminopyrimidin-4(3H)-one 5'-monophosphate deformylase (221 aa).

4 residues coordinate Fe cation: Glu-29, His-31, Asp-40, and His-108.

This sequence belongs to the creatininase superfamily. FAPy deformylase family. As to quaternary structure, homodimer. The cofactor is Fe(2+). Zn(2+) is required as a cofactor.

It carries out the reaction 2-amino-5-formylamino-6-(5-phospho-D-ribosylamino)pyrimidin-4(3H)-one + H2O = 2,5-diamino-6-(1-D-ribosylamino)pyrimidin-4(3H)-one 5'-phosphate + formate + H(+). Its pathway is cofactor biosynthesis; coenzyme F420 biosynthesis. It participates in cofactor biosynthesis; riboflavin biosynthesis. Its function is as follows. Catalyzes the hydrolysis of the formamide of 2-amino-5-formylamino-6-ribosylamino-4(3H)-pyrimidinone 5'-monophosphate (FAPy) to form 2,5-diamino-6-ribosylamino-4(3H)-pyrimidinone 5'-phosphate (APy). The chain is 2-amino-5-formylamino-6-ribosylaminopyrimidin-4(3H)-one 5'-monophosphate deformylase from Methanococcus maripaludis (strain C7 / ATCC BAA-1331).